The following is a 218-amino-acid chain: MRLILLGAPGAGKGTQATFICQKYGIPQISTGDMLRAAVKAGTPLGVEAKKIMDAGALVSDDLIINLVKERIAQPDCAKGFLFDGFPRTIPQADAMKAAGVKIDYVLEIDVPFEAIIERMSGRRSHTASGRTYHVKYNPPKVEGKDDVTGEPLIQREDDKEETVRKRLEVYSAQTRPLVEYYSSWAKTSPQAAPKYRAISGMGGVDEITERAFQALSS.

10 to 15 (GAGKGT) lines the ATP pocket. Residues 30 to 59 (STGDMLRAAVKAGTPLGVEAKKIMDAGALV) form an NMP region. Residues Thr-31, Arg-36, 57 to 59 (ALV), 85 to 88 (GFPR), and Gln-92 each bind AMP. Residues 122-159 (GRRSHTASGRTYHVKYNPPKVEGKDDVTGEPLIQREDD) form an LID region. ATP-binding positions include Arg-123 and 132–133 (TY). Residues Arg-156 and Arg-167 each contribute to the AMP site. Gly-203 contacts ATP.

The protein belongs to the adenylate kinase family. In terms of assembly, monomer.

It localises to the cytoplasm. The catalysed reaction is AMP + ATP = 2 ADP. It participates in purine metabolism; AMP biosynthesis via salvage pathway; AMP from ADP: step 1/1. In terms of biological role, catalyzes the reversible transfer of the terminal phosphate group between ATP and AMP. Plays an important role in cellular energy homeostasis and in adenine nucleotide metabolism. In Polaromonas sp. (strain JS666 / ATCC BAA-500), this protein is Adenylate kinase.